The sequence spans 229 residues: Leucyl/phenylalanyl-tRNA--protein transferase (229 aa).

The protein belongs to the L/F-transferase family.

It localises to the cytoplasm. It carries out the reaction N-terminal L-lysyl-[protein] + L-leucyl-tRNA(Leu) = N-terminal L-leucyl-L-lysyl-[protein] + tRNA(Leu) + H(+). The enzyme catalyses N-terminal L-arginyl-[protein] + L-leucyl-tRNA(Leu) = N-terminal L-leucyl-L-arginyl-[protein] + tRNA(Leu) + H(+). The catalysed reaction is L-phenylalanyl-tRNA(Phe) + an N-terminal L-alpha-aminoacyl-[protein] = an N-terminal L-phenylalanyl-L-alpha-aminoacyl-[protein] + tRNA(Phe). Functionally, functions in the N-end rule pathway of protein degradation where it conjugates Leu, Phe and, less efficiently, Met from aminoacyl-tRNAs to the N-termini of proteins containing an N-terminal arginine or lysine. The chain is Leucyl/phenylalanyl-tRNA--protein transferase from Pseudomonas syringae pv. tomato (strain ATCC BAA-871 / DC3000).